A 253-amino-acid polypeptide reads, in one-letter code: Acidic endochitinase pcht28 (253 aa).

The N-terminal stretch at M1–A24 is a signal peptide. E92 serves as the catalytic Proton donor. A disulfide bridge links C212 with C244.

This sequence belongs to the glycosyl hydrolase 19 family. Chitinase class II subfamily.

The protein localises to the secreted. The protein resides in the extracellular space. The enzyme catalyses Random endo-hydrolysis of N-acetyl-beta-D-glucosaminide (1-&gt;4)-beta-linkages in chitin and chitodextrins.. Functionally, defense against chitin-containing fungal pathogens. The protein is Acidic endochitinase pcht28 of Solanum chilense (Tomato).